The primary structure comprises 773 residues: Kelch domain-containing protein 7A (773 aa).

The helical transmembrane segment at 23 to 40 threads the bilayer; sequence VVLSAAALLLVTAAYKLY. Residue asparagine 61 is glycosylated (N-linked (GlcNAc...) asparagine). 2 disordered regions span residues 64-99 and 114-207; these read EALGQLAFQEAPPGTLPRGRRRRKASKGAGTSLDYS and SEEA…APNG. Serine 89 is modified (phosphoserine). Basic and acidic residues predominate over residues 114-126; that stretch reads SEEATRKGSDESQ. N-linked (GlcNAc...) asparagine glycosylation occurs at asparagine 256. The interval 296–355 is disordered; the sequence is KADSRPVPCPAALADAPSPGPGPEPLVTGAASRDEAANTAGGGASEAASPQPVASPSAPG. Kelch repeat units follow at residues 323 to 370, 488 to 534, 537 to 585, 586 to 628, and 631 to 673; these read TGAA…ENPE, KRLV…LCTL, YLFV…ALEG, HLYA…ATVC, and EIFV…AVNG. Positions 340–354 are enriched in low complexity; sequence SEAASPQPVASPSAP. Serine 361 is subject to Phosphoserine.

It is found in the membrane. In Mus musculus (Mouse), this protein is Kelch domain-containing protein 7A (Klhdc7a).